The sequence spans 325 residues: Necdin (325 aa).

Disordered stretches follow at residues 1–69 (MSEQ…IEDV) and 77–96 (AAEE…IPAP). Positions 102–301 (LVQKAHELMW…QAWPSRYREA (200 aa)) constitute an MAGE domain.

In terms of assembly, binds to the transactivation domains of E2F1 and p53. Binds also SV40 large T antigen and adenovirus E1A. Interacts with nucleobindin 1 and 2. As to expression, brain specific. Not detected in other tissues. Expressed in postmitotic neurons. In adult brain the highest expression is in hypothalamus. Highly expressed in thalamus and midbrain. Relatively low levels are in cerebral cortex, hippocampus, striatum, olfactory bulb, cerebellum, pons and spinal cord. Also detected in neurally differentiated embryonal carcinoma cells.

Its subcellular location is the cytoplasm. It is found in the nucleus. It localises to the nucleoplasm. The protein resides in the nucleus matrix. Growth suppressor that facilitates the entry of the cell into cell cycle arrest. Functionally similar to the retinoblastoma protein it binds to and represses the activity of cell-cycle-promoting proteins such as SV40 large T antigen, adenovirus E1A, and the transcription factor E2F. Necdin also interacts with p53 and works in an additive manner to inhibit cell growth. Also functions as a transcription factor and directly binds to specific guanosine-rich DNA sequences. This is Necdin (Ndn) from Mus musculus (Mouse).